The primary structure comprises 909 residues: Villin-1 (909 aa).

Gelsolin-like repeat units lie at residues 29–79 (KQLI…VDSI), 149–189 (VRVK…QEKA), 262–305 (GNLH…TERK), 391–448 (LKVW…QDRA), 529–569 (MQAI…SDHE), and 631–672 (LKVK…KSKE). Disordered stretches follow at residues 733-781 (SLKG…CSSE) and 816-835 (DGVA…QKPR). Residues 752–762 (QSKDNASRDLQ) show a composition bias toward basic and acidic residues. Ser-780 bears the Phosphoserine mark. The 66-residue stretch at 844–909 (SLESLAYSYE…NKLKISLHLF (66 aa)) folds into the HP domain.

This sequence belongs to the villin/gelsolin family. Expressed in all tissues examined. Mainly detected in the vascular tissue and the pericycle of roots and in the vasculature of leaves. Not expressed in the root cap.

It localises to the cytoplasm. Its subcellular location is the cytoskeleton. In terms of biological role, binds actin and actin filament bundles in a Ca(2+)/calmodulin-insensitive manner, but is unable to sever, cap, and nucleate actin filament formation in vitro. Does not protect individual filaments from severing by VLN3 (AC O81645). The protein is Villin-1 of Arabidopsis thaliana (Mouse-ear cress).